A 135-amino-acid polypeptide reads, in one-letter code: Large ribosomal subunit protein uL16c (135 aa).

This sequence belongs to the universal ribosomal protein uL16 family. In terms of assembly, part of the 50S ribosomal subunit.

The protein resides in the plastid. Its subcellular location is the chloroplast. This Olimarabidopsis pumila (Dwarf rocket) protein is Large ribosomal subunit protein uL16c.